Reading from the N-terminus, the 590-residue chain is KNR4/SMI1 homolog 2 (590 aa).

Disordered regions lie at residues 59–97 (SSSH…SNTN), 216–239 (FQHQ…ETHG), and 407–590 (TPQR…DVAL). The segment covering 71–85 (GSRTSLSRNGSSTTV) has biased composition (polar residues). Residues 217–226 (QHQQQQQQHQ) are compositionally biased toward low complexity. A compositionally biased stretch (polar residues) spans 430–454 (PSMSGATANTNKSQNPLINMESSSK). Composition is skewed to basic and acidic residues over residues 470-481 (PEEPVKKSEVKS) and 489-515 (EPEK…AKED). Over residues 516–528 (DKEEEEEEQEEEK) the composition is skewed to acidic residues. A compositionally biased stretch (basic residues) spans 554–568 (TQKKNQSKKAKKQQQ). A compositionally biased stretch (acidic residues) spans 576-590 (NDVEEVAEDLNDVAL).

Belongs to the KNR4/SMI1 family.

The sequence is that of KNR4/SMI1 homolog 2 from Debaryomyces hansenii (strain ATCC 36239 / CBS 767 / BCRC 21394 / JCM 1990 / NBRC 0083 / IGC 2968) (Yeast).